Reading from the N-terminus, the 143-residue chain is Large ribosomal subunit protein uL13 (143 aa).

The protein belongs to the universal ribosomal protein uL13 family. In terms of assembly, part of the 50S ribosomal subunit.

Its function is as follows. This protein is one of the early assembly proteins of the 50S ribosomal subunit, although it is not seen to bind rRNA by itself. It is important during the early stages of 50S assembly. The sequence is that of Large ribosomal subunit protein uL13 from Methanosarcina acetivorans (strain ATCC 35395 / DSM 2834 / JCM 12185 / C2A).